Consider the following 310-residue polypeptide: Methionyl-tRNA formyltransferase (310 aa).

(6S)-5,6,7,8-tetrahydrofolate is bound at residue 109–112; that stretch reads SLLP.

Belongs to the Fmt family.

The catalysed reaction is L-methionyl-tRNA(fMet) + (6R)-10-formyltetrahydrofolate = N-formyl-L-methionyl-tRNA(fMet) + (6S)-5,6,7,8-tetrahydrofolate + H(+). Its function is as follows. Attaches a formyl group to the free amino group of methionyl-tRNA(fMet). The formyl group appears to play a dual role in the initiator identity of N-formylmethionyl-tRNA by promoting its recognition by IF2 and preventing the misappropriation of this tRNA by the elongation apparatus. The sequence is that of Methionyl-tRNA formyltransferase from Agathobacter rectalis (strain ATCC 33656 / DSM 3377 / JCM 17463 / KCTC 5835 / VPI 0990) (Eubacterium rectale).